The primary structure comprises 352 residues: N-acetyl-gamma-glutamyl-phosphate reductase (352 aa).

The active site involves cysteine 155.

The protein belongs to the NAGSA dehydrogenase family. Type 1 subfamily.

It localises to the cytoplasm. The enzyme catalyses N-acetyl-L-glutamate 5-semialdehyde + phosphate + NADP(+) = N-acetyl-L-glutamyl 5-phosphate + NADPH + H(+). It participates in amino-acid biosynthesis; L-arginine biosynthesis; N(2)-acetyl-L-ornithine from L-glutamate: step 3/4. Catalyzes the NADPH-dependent reduction of N-acetyl-5-glutamyl phosphate to yield N-acetyl-L-glutamate 5-semialdehyde. The chain is N-acetyl-gamma-glutamyl-phosphate reductase from Acaryochloris marina (strain MBIC 11017).